A 195-amino-acid polypeptide reads, in one-letter code: Nucleoside triphosphate pyrophosphatase (195 aa).

Residue Asp-70 is the Proton acceptor of the active site.

This sequence belongs to the Maf family. A divalent metal cation serves as cofactor.

It is found in the cytoplasm. The catalysed reaction is a ribonucleoside 5'-triphosphate + H2O = a ribonucleoside 5'-phosphate + diphosphate + H(+). It carries out the reaction a 2'-deoxyribonucleoside 5'-triphosphate + H2O = a 2'-deoxyribonucleoside 5'-phosphate + diphosphate + H(+). Its function is as follows. Nucleoside triphosphate pyrophosphatase. May have a dual role in cell division arrest and in preventing the incorporation of modified nucleotides into cellular nucleic acids. In Cyanothece sp. (strain PCC 7425 / ATCC 29141), this protein is Nucleoside triphosphate pyrophosphatase.